We begin with the raw amino-acid sequence, 599 residues long: Elongation factor 4 (599 aa).

A tr-type G domain is found at 4-186 (EHIRNFSIIA…EIVKKIPPPQ (183 aa)). GTP is bound by residues 16–21 (DHGKST) and 133–136 (NKID).

This sequence belongs to the TRAFAC class translation factor GTPase superfamily. Classic translation factor GTPase family. LepA subfamily.

It is found in the cell inner membrane. The enzyme catalyses GTP + H2O = GDP + phosphate + H(+). Required for accurate and efficient protein synthesis under certain stress conditions. May act as a fidelity factor of the translation reaction, by catalyzing a one-codon backward translocation of tRNAs on improperly translocated ribosomes. Back-translocation proceeds from a post-translocation (POST) complex to a pre-translocation (PRE) complex, thus giving elongation factor G a second chance to translocate the tRNAs correctly. Binds to ribosomes in a GTP-dependent manner. The protein is Elongation factor 4 of Geobacter sp. (strain M21).